Here is a 359-residue protein sequence, read N- to C-terminus: MRKIIHIDMDCYFAAVEMRDFPEYRGKPLAVGGSRVQRGVISTCNYEARKFGVRSAMATGYALKLCPNLILVPGRMQVYKEVSQQIRAIFSRYTELIEPLSLDEAYLDVSDCKLFKGSATLIAEAIRRDILAETGLTASAGVAPIKFLAKVASDLNKPNGQCVIPPDEVPEFVKSLSLRKIPGVGKVTAEKLSSLGLNTCADVQAYPKQELIARFGKFGAVLVERAHGIDERGISVSRERKSVGVETTLAQDIYTLEQCQQVMPGLIQELSSRLVRSAKGRQIHKQVVKLKFNDFKQTTIEHRSDEVSVVMFYELLSQAMARQEGRGIRLLGVSVGLAETKDTLSPLMVRETKQLDFVF.

The UmuC domain occupies 4–185; it reads IIHIDMDCYF…LSLRKIPGVG (182 aa). Mg(2+)-binding residues include Asp-8 and Asp-103. The active site involves Glu-104.

Belongs to the DNA polymerase type-Y family. As to quaternary structure, monomer. Mg(2+) is required as a cofactor.

The protein resides in the cytoplasm. It catalyses the reaction DNA(n) + a 2'-deoxyribonucleoside 5'-triphosphate = DNA(n+1) + diphosphate. In terms of biological role, poorly processive, error-prone DNA polymerase involved in untargeted mutagenesis. Copies undamaged DNA at stalled replication forks, which arise in vivo from mismatched or misaligned primer ends. These misaligned primers can be extended by PolIV. Exhibits no 3'-5' exonuclease (proofreading) activity. May be involved in translesional synthesis, in conjunction with the beta clamp from PolIII. The chain is DNA polymerase IV from Shewanella sp. (strain MR-4).